The sequence spans 340 residues: Cytoskeleton protein RodZ (340 aa).

Residues 1–111 (MNTEATQEKS…LGKQRKKRDG (111 aa)) lie on the Cytoplasmic side of the membrane. The 61-residue stretch at 19–79 (LRTAREQMGL…RLVHVPEEEL (61 aa)) folds into the HTH cro/C1-type domain. A DNA-binding region (H-T-H motif) is located at residues 30–49 (QQNVAERLCLKLSTIRDIEE). The chain crosses the membrane as a helical; Signal-anchor for type II membrane protein span at residues 112–132 (WLMIFTWLVLFVVLGLTGAWW). Topologically, residues 133 to 340 (WQNHKAAQDD…QVARLTVGAP (208 aa)) are periplasmic. The tract at residues 162-252 (ALSDDNANGG…AAPLPTGSAA (91 aa)) is disordered. Polar residues predominate over residues 183–201 (ATANNAPSSVTATSDNGTP). The segment covering 202–233 (AATAQSSQVTASNAAPAANAVNDNTPPVAVAP) has biased composition (low complexity).

Belongs to the RodZ family.

The protein localises to the cell inner membrane. Cytoskeletal protein that is involved in cell-shape control through regulation of the length of the long axis. This chain is Cytoskeleton protein RodZ, found in Erwinia tasmaniensis (strain DSM 17950 / CFBP 7177 / CIP 109463 / NCPPB 4357 / Et1/99).